The primary structure comprises 128 residues: uncharacterized protein (128 aa).

The next 3 helical transmembrane spans lie at 13-35, 42-64, and 90-112; these read FQMA…VFFV, IIAL…YNGG, and LVLT…SIIL.

It localises to the cell membrane. This is an uncharacterized protein from Methanocaldococcus jannaschii (strain ATCC 43067 / DSM 2661 / JAL-1 / JCM 10045 / NBRC 100440) (Methanococcus jannaschii).